The sequence spans 297 residues: Ubiquinone biosynthesis protein COQ4, mitochondrial (297 aa).

A mitochondrion-targeting transit peptide spans 1–54 (MLSSARARLPISLCSFSLPFARLPNTLSRYQETWQRLPGRTHPTRSIRTTPAYE). Residues histidine 178, aspartate 179, histidine 182, and glutamate 194 each contribute to the Zn(2+) site.

The protein belongs to the COQ4 family. As to quaternary structure, component of a multi-subunit COQ enzyme complex, composed of at least COQ3, COQ4, COQ5, COQ6, COQ7 and COQ9. Zn(2+) serves as cofactor.

It is found in the mitochondrion inner membrane. It catalyses the reaction a 4-hydroxy-3-methoxy-5-(all-trans-polyprenyl)benzoate + H(+) = a 2-methoxy-6-(all-trans-polyprenyl)phenol + CO2. Its pathway is cofactor biosynthesis; ubiquinone biosynthesis. In terms of biological role, lyase that catalyzes the C1-decarboxylation of 4-hydroxy-3-methoxy-5-(all-trans-polyprenyl)benzoic acid into 2-methoxy-6-(all-trans-polyprenyl)phenol during ubiquinone biosynthesis. The polypeptide is Ubiquinone biosynthesis protein COQ4, mitochondrial (Laccaria bicolor (strain S238N-H82 / ATCC MYA-4686) (Bicoloured deceiver)).